A 253-amino-acid chain; its full sequence is Transmembrane protein 51 (253 aa).

Transmembrane regions (helical) follow at residues 17 to 37 (IGLGMLVLGVIMAMWNLVPGF) and 65 to 85 (VAYVLVGAGVMLLLLSICLSI). 2 disordered regions span residues 93–133 (QGED…YVPS) and 164–253 (LTGL…RPPD). Over residues 113–124 (EDSQEEEEEDEE) the composition is skewed to acidic residues. Position 115 is a phosphoserine (Ser115). The segment covering 164-176 (LTGLDETTPTSTR) has biased composition (polar residues). Phosphoserine is present on residues Ser182 and Ser192. The span at 194-205 (LAKRLKPLKVRR) shows a compositional bias: basic residues. The segment covering 206–217 (IKSEKLHLKDFR) has biased composition (basic and acidic residues). The segment covering 224-238 (NVPPPSIEPLTPPPQ) has biased composition (pro residues). Positions 242-253 (VQEKAPDTRPPD) are enriched in basic and acidic residues.

The protein localises to the membrane. The chain is Transmembrane protein 51 (TMEM51) from Homo sapiens (Human).